The following is a 321-amino-acid chain: Probable protein phosphatase methylesterase 1 (321 aa).

Residues serine 170, aspartate 195, and histidine 307 contribute to the active site.

The protein belongs to the AB hydrolase superfamily.

It carries out the reaction [phosphatase 2A protein]-C-terminal L-leucine methyl ester + H2O = [phosphatase 2A protein]-C-terminal L-leucine + methanol + H(+). Demethylates proteins that have been reversibly carboxymethylated. In Dictyostelium discoideum (Social amoeba), this protein is Probable protein phosphatase methylesterase 1 (ppme1).